The sequence spans 83 residues: Snake venom metalloproteinase BnP1 (83 aa).

The 76-residue stretch at 8–83 (SYIELAVVAD…NPQCIINQPI (76 aa)) folds into the Peptidase M12B domain. The Ca(2+) site is built by E11, C77, and N80.

This sequence belongs to the venom metalloproteinase (M12B) family. P-I subfamily. As to quaternary structure, monomer. It depends on Zn(2+) as a cofactor. As to expression, expressed by the venom gland.

The protein resides in the secreted. Inhibited by EDTA. Its function is as follows. This protein is a zinc protease from snake venom that is devoid of significant myotoxic and hemorrhagic activities. It hydrolyzes the Aalpha-chain and more slowly the Bbeta-chain of fibrin and fibrinogen, without affecting the gamma-chains. It induces cell detachment and a apoptosis (anoikis) in endothelial cells. This is Snake venom metalloproteinase BnP1 from Bothrops pauloensis (Neuwied's lancehead).